The chain runs to 528 residues: Lanosterol 14-alpha demethylase (528 aa).

C470 is a binding site for heme.

Belongs to the cytochrome P450 family. The cofactor is heme.

It localises to the membrane. It carries out the reaction a 14alpha-methyl steroid + 3 reduced [NADPH--hemoprotein reductase] + 3 O2 = a Delta(14) steroid + formate + 3 oxidized [NADPH--hemoprotein reductase] + 4 H2O + 4 H(+). The enzyme catalyses a 14alpha-methyl steroid + reduced [NADPH--hemoprotein reductase] + O2 = a 14alpha-hydroxymethyl steroid + oxidized [NADPH--hemoprotein reductase] + H2O + H(+). The catalysed reaction is a 14alpha-hydroxymethyl steroid + reduced [NADPH--hemoprotein reductase] + O2 = a 14alpha-formyl steroid + oxidized [NADPH--hemoprotein reductase] + 2 H2O + H(+). It catalyses the reaction a 14alpha-formyl steroid + reduced [NADPH--hemoprotein reductase] + O2 = a Delta(14) steroid + formate + oxidized [NADPH--hemoprotein reductase] + H2O + 2 H(+). It carries out the reaction lanosterol + 3 reduced [NADPH--hemoprotein reductase] + 3 O2 = 4,4-dimethyl-5alpha-cholesta-8,14,24-trien-3beta-ol + formate + 3 oxidized [NADPH--hemoprotein reductase] + 4 H2O + 4 H(+). The enzyme catalyses lanosterol + reduced [NADPH--hemoprotein reductase] + O2 = 32-hydroxylanosterol + oxidized [NADPH--hemoprotein reductase] + H2O + H(+). The catalysed reaction is 32-hydroxylanosterol + reduced [NADPH--hemoprotein reductase] + O2 = 32-oxolanosterol + oxidized [NADPH--hemoprotein reductase] + 2 H2O + H(+). It catalyses the reaction 32-oxolanosterol + reduced [NADPH--hemoprotein reductase] + O2 = 4,4-dimethyl-5alpha-cholesta-8,14,24-trien-3beta-ol + formate + oxidized [NADPH--hemoprotein reductase] + H2O + 2 H(+). It carries out the reaction eburicol + 3 reduced [NADPH--hemoprotein reductase] + 3 O2 = 14-demethyleburicol + formate + 3 oxidized [NADPH--hemoprotein reductase] + 4 H2O + 4 H(+). The enzyme catalyses eburicol + reduced [NADPH--hemoprotein reductase] + O2 = 32-hydroxyeburicol + oxidized [NADPH--hemoprotein reductase] + H2O + H(+). The catalysed reaction is 32-hydroxyeburicol + reduced [NADPH--hemoprotein reductase] + O2 = 32-oxoeburicol + oxidized [NADPH--hemoprotein reductase] + 2 H2O + H(+). It catalyses the reaction 32-oxoeburicol + reduced [NADPH--hemoprotein reductase] + O2 = 14-demethyleburicol + formate + oxidized [NADPH--hemoprotein reductase] + H2O + 2 H(+). The protein operates within steroid biosynthesis; zymosterol biosynthesis; zymosterol from lanosterol: step 1/6. Its function is as follows. Sterol 14alpha-demethylase that plays a critical role in the third module of ergosterol biosynthesis pathway, being ergosterol the major sterol component in fungal membranes that participates in a variety of functions. The third module or late pathway involves the ergosterol synthesis itself through consecutive reactions that mainly occur in the endoplasmic reticulum (ER) membrane. In filamentous fungi, during the initial step of this module, lanosterol (lanosta-8,24-dien-3beta-ol) can be metabolized to eburicol. Sterol 14alpha-demethylase catalyzes the three-step oxidative removal of the 14alpha-methyl group (C-32) of both these sterols in the form of formate, and converts eburicol and lanosterol to 14-demethyleburicol (4,4,24-trimethylergosta-8,14,24(28)-trienol) and 4,4-dimethyl-5alpha-cholesta-8,14,24-trien-3beta-ol, respectively, which are further metabolized by other enzymes in the pathway to ergosterol. Can also use substrates not intrinsic to fungi, such as 24,25-dihydrolanosterol (DHL), producing 4,4-dimethyl-8,14-cholestadien-3-beta-ol, but at lower rates than the endogenous substrates. This Candida tropicalis (Yeast) protein is Lanosterol 14-alpha demethylase (ERG11).